We begin with the raw amino-acid sequence, 692 residues long: UvrABC system protein B (692 aa).

A Helicase ATP-binding domain is found at 32–187 (ENIENGEKAQ…LLNDLVGIQF (156 aa)). 45-52 (GATGTGKT) serves as a coordination point for ATP. The Beta-hairpin motif lies at 98-121 (YYDYYQPEAYVPSSDTYIEKDSSV). In terms of domain architecture, Helicase C-terminal spans 436-631 (QIDDLVGEIH…TIKKEIRDLI (196 aa)). Residues 656-691 (KALVKKLEKEMQQAAAALDFEGAAQLRDMVLELRAM) form the UVR domain.

It belongs to the UvrB family. Forms a heterotetramer with UvrA during the search for lesions. Interacts with UvrC in an incision complex.

It is found in the cytoplasm. Its function is as follows. The UvrABC repair system catalyzes the recognition and processing of DNA lesions. A damage recognition complex composed of 2 UvrA and 2 UvrB subunits scans DNA for abnormalities. Upon binding of the UvrA(2)B(2) complex to a putative damaged site, the DNA wraps around one UvrB monomer. DNA wrap is dependent on ATP binding by UvrB and probably causes local melting of the DNA helix, facilitating insertion of UvrB beta-hairpin between the DNA strands. Then UvrB probes one DNA strand for the presence of a lesion. If a lesion is found the UvrA subunits dissociate and the UvrB-DNA preincision complex is formed. This complex is subsequently bound by UvrC and the second UvrB is released. If no lesion is found, the DNA wraps around the other UvrB subunit that will check the other stand for damage. In Lactococcus lactis subsp. cremoris (strain SK11), this protein is UvrABC system protein B.